Consider the following 268-residue polypeptide: 2,5-diamino-6-ribosylamino-4(3H)-pyrimidinone 5'-phosphate reductase (268 aa).

NADP(+) contacts are provided by residues threonine 68, aspartate 72, 103-106 (SNLR), and 191-195 (GAELL).

Belongs to the HTP reductase family. As to quaternary structure, homodimer.

The catalysed reaction is 2,5-diamino-6-(1-D-ribitylamino)pyrimidin-4(3H)-one 5'-phosphate + NADP(+) = 2,5-diamino-6-(1-D-ribosylamino)pyrimidin-4(3H)-one 5'-phosphate + NADPH + H(+). The enzyme catalyses 2,5-diamino-6-(1-D-ribitylamino)pyrimidin-4(3H)-one 5'-phosphate + NAD(+) = 2,5-diamino-6-(1-D-ribosylamino)pyrimidin-4(3H)-one 5'-phosphate + NADH + H(+). It participates in cofactor biosynthesis; riboflavin biosynthesis. Functionally, catalyzes an early step in riboflavin biosynthesis, the NADPH-dependent reduction of the ribose side chain of 2,5-diamino-6-ribosylamino-4(3H)-pyrimidinone 5'-phosphate, yielding 2,5-diamino-6-ribitylamino-4(3H)-pyrimidinone 5'-phosphate. This chain is 2,5-diamino-6-ribosylamino-4(3H)-pyrimidinone 5'-phosphate reductase, found in Schizosaccharomyces pombe (strain 972 / ATCC 24843) (Fission yeast).